The sequence spans 169 residues: Ribosome maturation factor RimP (169 aa).

It belongs to the RimP family.

It is found in the cytoplasm. Functionally, required for maturation of 30S ribosomal subunits. The polypeptide is Ribosome maturation factor RimP (Coprothermobacter proteolyticus (strain ATCC 35245 / DSM 5265 / OCM 4 / BT)).